We begin with the raw amino-acid sequence, 300 residues long: Ornithine carbamoyltransferase (300 aa).

Residues serine 50–threonine 53, glutamine 77, arginine 101, and histidine 128–glutamine 131 contribute to the carbamoyl phosphate site. L-ornithine contacts are provided by residues asparagine 159, aspartate 219, and serine 223 to methionine 224. Carbamoyl phosphate-binding positions include cysteine 257 to leucine 258 and arginine 285.

This sequence belongs to the aspartate/ornithine carbamoyltransferase superfamily. OTCase family.

Its subcellular location is the cytoplasm. It catalyses the reaction carbamoyl phosphate + L-ornithine = L-citrulline + phosphate + H(+). It functions in the pathway amino-acid degradation; L-arginine degradation via ADI pathway; carbamoyl phosphate from L-arginine: step 2/2. Reversibly catalyzes the transfer of the carbamoyl group from carbamoyl phosphate (CP) to the N(epsilon) atom of ornithine (ORN) to produce L-citrulline. This Haloquadratum walsbyi (strain DSM 16790 / HBSQ001) protein is Ornithine carbamoyltransferase.